The sequence spans 520 residues: Amine oxidase [flavin-containing] B (520 aa).

Residues 1 to 489 (MNSKCDVVVV…TFLERHLPSV (489 aa)) lie on the Cytoplasmic side of the membrane. At lysine 52 the chain carries N6-acetyllysine. Cysteine 397 carries the S-8alpha-FAD cysteine modification. Residues 490–516 (PGLLRLIRLTTVVSAVALGFLAQKRGL) traverse the membrane as a helical; Anchor for type IV membrane protein segment. Residues 517–520 (LLRI) lie on the Mitochondrial intermembrane side of the membrane.

The protein belongs to the flavin monoamine oxidase family. In terms of assembly, monomer, homo- or heterodimer (containing two subunits of similar size). Each subunit contains a covalently bound flavin. Enzymatically active as monomer. FAD is required as a cofactor.

The protein localises to the mitochondrion outer membrane. The catalysed reaction is a secondary aliphatic amine + O2 + H2O = a primary amine + an aldehyde + H2O2. It catalyses the reaction (R)-adrenaline + O2 + H2O = (R)-3,4-dihydroxymandelaldehyde + methylamine + H2O2. The enzyme catalyses a primary methyl amine + O2 + H2O = an aldehyde + H2O2 + NH4(+). It carries out the reaction benzylamine + O2 + H2O = benzaldehyde + H2O2 + NH4(+). The catalysed reaction is dopamine + O2 + H2O = 3,4-dihydroxyphenylacetaldehyde + H2O2 + NH4(+). It catalyses the reaction tyramine + O2 + H2O = (4-hydroxyphenyl)acetaldehyde + H2O2 + NH4(+). The enzyme catalyses (R)-noradrenaline + O2 + H2O = (R)-3,4-dihydroxymandelaldehyde + H2O2 + NH4(+). It carries out the reaction 2-phenylethylamine + O2 + H2O = 2-phenylacetaldehyde + H2O2 + NH4(+). The catalysed reaction is N-acetylputrescine + O2 + H2O = 4-acetamidobutanal + H2O2 + NH4(+). Its function is as follows. Catalyzes the oxidative deamination of primary and some secondary amines such as neurotransmitters, and exogenous amines including the tertiary amine, neurotoxin 1-methyl-4-phenyl-1,2,3,6-tetrahydropyridine (MPTP), with concomitant reduction of oxygen to hydrogen peroxide and participates in the metabolism of neuroactive and vasoactive amines in the central nervous system and peripheral tissues. Preferentially degrades benzylamine and phenylethylamine. This Cavia porcellus (Guinea pig) protein is Amine oxidase [flavin-containing] B.